Here is a 453-residue protein sequence, read N- to C-terminus: Adenosylmethionine-8-amino-7-oxononanoate aminotransferase (453 aa).

118–119 contributes to the pyridoxal 5'-phosphate binding site; the sequence is GS. Tyr-151 lines the substrate pocket. Asp-258 is a pyridoxal 5'-phosphate binding site. Substrate is bound by residues Lys-287, Gly-322, and Arg-417. Lys-287 is subject to N6-(pyridoxal phosphate)lysine.

This sequence belongs to the class-III pyridoxal-phosphate-dependent aminotransferase family. BioA subfamily. Homodimer. Requires pyridoxal 5'-phosphate as cofactor.

Its subcellular location is the cytoplasm. The enzyme catalyses (8S)-8-amino-7-oxononanoate + S-adenosyl-L-methionine = S-adenosyl-4-methylsulfanyl-2-oxobutanoate + (7R,8S)-7,8-diammoniononanoate. Its pathway is cofactor biosynthesis; biotin biosynthesis; 7,8-diaminononanoate from 8-amino-7-oxononanoate (SAM route): step 1/1. In terms of biological role, catalyzes the transfer of the alpha-amino group from S-adenosyl-L-methionine (SAM) to 7-keto-8-aminopelargonic acid (KAPA) to form 7,8-diaminopelargonic acid (DAPA). It is the only aminotransferase known to utilize SAM as an amino donor. In Geobacter sulfurreducens (strain ATCC 51573 / DSM 12127 / PCA), this protein is Adenosylmethionine-8-amino-7-oxononanoate aminotransferase.